Here is a 668-residue protein sequence, read N- to C-terminus: Probable syringafactin export ATP-binding/permease protein SyfD (668 aa).

Residues 22–260 enclose the ABC transporter domain; that stretch reads LRLQQVSRSF…APEAQPATPP (239 aa). An ATP-binding site is contributed by 58–65; the sequence is GASGSGKS. The disordered stretch occupies residues 242-263; the sequence is RRTAQTTQPAPEAQPATPPGPA. A compositionally biased stretch (low complexity) spans 245 to 256; it reads AQTTQPAPEAQP. 5 helical membrane passes run 267–287, 293–313, 541–561, 602–622, and 631–651; these read LLASLGLFREAFNMAWIALIS, LLTMLGIIIGITSVVSISAIG, LTLLLSLIAVISLVVGGIGVM, MGGVIGIGLSYAIGYLFTLFV, and LASVVTAFACSTLIGVLFGFV.

This sequence belongs to the ABC transporter superfamily. Macrolide exporter (TC 3.A.1.122) family. Probably part of a tripartite efflux system, which is composed of an inner membrane transporter, a periplasmic membrane fusion protein, and an outer membrane component.

It is found in the cell inner membrane. Functionally, probably involved in the export of syringafactins. The chain is Probable syringafactin export ATP-binding/permease protein SyfD from Pseudomonas syringae pv. tomato (strain ATCC BAA-871 / DC3000).